A 356-amino-acid chain; its full sequence is C-X-C chemokine receptor type 2 (356 aa).

At 1–46 the chain is on the extracellular side; sequence MEYINWDNYSLEDLFGDIDNYTYNTEMPIIPADSAPCRPESLDINK. Asparagine 8 and asparagine 20 each carry an N-linked (GlcNAc...) asparagine glycan. A helical membrane pass occupies residues 47-73; sequence YAVVVIYVLVFVLNLLGNSLVIMVVLY. The Cytoplasmic segment spans residues 74–82; the sequence is SRVSHSVTD. Residues 83-103 traverse the membrane as a helical segment; sequence VYLLNLAIADLLFALTLPIWA. Topologically, residues 104–118 are extracellular; that stretch reads VSKVKGWIFGTPLCK. Cysteine 117 and cysteine 194 are joined by a disulfide. Residues 119–140 form a helical membrane-spanning segment; the sequence is IVSLLKEVNFYSGILLLASISM. Residues 141-161 are Cytoplasmic-facing; it reads DRYLAIVHATRRLTQKKHWVK. A helical transmembrane segment spans residues 162–181; sequence FICLGIWALSLILSLPIFVF. Topologically, residues 182–206 are extracellular; that stretch reads RRAINPPYSSPVCYEDMGTNTTKLR. Residues 207–229 traverse the membrane as a helical segment; the sequence is IVMRALPQTFGFIVPLMIMLFCY. Residues 230–249 are Cytoplasmic-facing; it reads GLTLRTLFEAHMGQKHRAMR. A helical membrane pass occupies residues 250-269; the sequence is VIFAVVLVFLLCWLPYNLVA. The Extracellular segment spans residues 270-290; sequence DTLMRLQAIEETCQRRNDIGR. A helical membrane pass occupies residues 291-311; it reads ALDATEILGFFHSCLNPLIYA. At 312-356 the chain is on the cytoplasmic side; the sequence is FIGQKFRHGLLKIMAFHGLISKEYLPKDSRPSFVGSSSANTSTTF.

This sequence belongs to the G-protein coupled receptor 1 family. Interacts with IL8. Interacts with GNAI2. Post-translationally, phosphorylated upon ligand binding; which is required for desensitization.

The protein localises to the cell membrane. Its function is as follows. Receptor for interleukin-8 which is a powerful neutrophil chemotactic factor. Binding of IL-8 to the receptor causes activation of neutrophils. This response is mediated via a G-protein that activates a phosphatidylinositol-calcium second messenger system. Binds to IL-8 with high affinity. Also binds with high affinity to CXCL3, GRO/MGSA and NAP-2. This Canis lupus familiaris (Dog) protein is C-X-C chemokine receptor type 2 (CXCR2).